Here is a 675-residue protein sequence, read N- to C-terminus: Methionine--tRNA ligase (675 aa).

Residues 15-25 (PYANGPIHLGH) carry the 'HIGH' region motif. Positions 146, 149, 159, and 162 each coordinate Zn(2+). Residues 332-336 (KMSKS) carry the 'KMSKS' region motif. Residue K335 participates in ATP binding. The tRNA-binding domain maps to 573 to 675 (DFAKVDMRVA…SGAQPGMQVK (103 aa)).

This sequence belongs to the class-I aminoacyl-tRNA synthetase family. MetG type 1 subfamily. Homodimer. Zn(2+) serves as cofactor.

The protein localises to the cytoplasm. The catalysed reaction is tRNA(Met) + L-methionine + ATP = L-methionyl-tRNA(Met) + AMP + diphosphate. Its function is as follows. Is required not only for elongation of protein synthesis but also for the initiation of all mRNA translation through initiator tRNA(fMet) aminoacylation. The polypeptide is Methionine--tRNA ligase (Photorhabdus laumondii subsp. laumondii (strain DSM 15139 / CIP 105565 / TT01) (Photorhabdus luminescens subsp. laumondii)).